The primary structure comprises 476 residues: Amino acid permease 3 (476 aa).

Residues methionine 1–serine 33 are Cytoplasmic-facing. The helical transmembrane segment at valine 34 to alanine 54 threads the bilayer. The Extracellular segment spans residues tryptophan 55–threonine 57. The helical transmembrane segment at alanine 58–phenylalanine 78 threads the bilayer. The Cytoplasmic portion of the chain corresponds to threonine 79 to tyrosine 122. Residues leucine 123 to isoleucine 143 form a helical membrane-spanning segment. The Extracellular portion of the chain corresponds to lysine 144–methionine 166. The next 2 helical transmembrane spans lie at isoleucine 167–tryptophan 187 and leucine 188–isoleucine 208. Residues alanine 209–leucine 277 lie on the Extracellular side of the membrane. The helical transmembrane segment at valine 278–phenylalanine 298 threads the bilayer. At glycine 299–aspartate 300 the chain is on the cytoplasmic side. Residues leucine 301–isoleucine 321 traverse the membrane as a helical segment. At alanine 322–alanine 324 the chain is on the extracellular side. The chain crosses the membrane as a helical span at residues alanine 325 to isoleucine 345. Residues glutamate 346 to threonine 384 lie on the Cytoplasmic side of the membrane. The next 2 helical transmembrane spans lie at valine 385–glycine 405 and leucine 406–alanine 426. Topologically, residues glutamine 427–glutamine 441 are cytoplasmic. Residues valine 442–valine 462 traverse the membrane as a helical segment. The Extracellular portion of the chain corresponds to leucine 463–tyrosine 476.

It belongs to the amino acid/polyamine transporter 2 family. Amino acid/auxin permease (AAAP) (TC 2.A.18.2) subfamily. As to expression, expressed in the root phloem. Detected in stamens, in cotyledons, and in major veins of mature leaves.

Its subcellular location is the cell membrane. The protein resides in the nucleus membrane. The protein localises to the endomembrane system. With respect to regulation, inhibited by carbonylcyanide m-chlorophenylhydrazone and 2,4-dinitrophenol. Its function is as follows. Amino acid-proton symporter. Stereospecific transporter with a broad specificity for GABA, tryptophan and both neutral and basic amino acids. High affinity transport of cationic amino acids. The polypeptide is Amino acid permease 3 (AAP3) (Arabidopsis thaliana (Mouse-ear cress)).